We begin with the raw amino-acid sequence, 343 residues long: Allergin-1 (343 aa).

Residues 1 to 19 form the signal peptide; that stretch reads MWSHLNRLLFWSIFSSVTC. Residues 20-227 are Extracellular-facing; the sequence is RKAVLDCEAM…GGDSCPFCLK (208 aa). Ig-like C2-type domains are found at residues 35-118 and 128-213; these read PSPC…RDFS and PVLN…HPVT. Asparagine 51, asparagine 60, asparagine 89, asparagine 151, asparagine 157, and asparagine 182 each carry an N-linked (GlcNAc...) asparagine glycan. 2 disulfides stabilise this stretch: cysteine 56–cysteine 103 and cysteine 147–cysteine 196. A helical membrane pass occupies residues 228–248; sequence LLLPGLLLLLVVIILILAFWV. The Cytoplasmic portion of the chain corresponds to 249-343; the sequence is LPKYKTRKAM…SGYVYSELNF (95 aa). 2 short sequence motifs (ITIM motif) span residues 311–316 and 336–341; these read LQYATP and YVYSEL. Phosphotyrosine occurs at positions 313 and 338.

Monomer. Interacts (tyrosine-phosphorylated) with PTPN6, PTPN11 and INPP5D. Post-translationally, N-glycosylated. As to expression, expressed in myeloid cells (dendritic cells, macrophages and neutrophils, weak expression on B-cells but not in T-cells or natural killer cells), peripheral blood basophils and mast cells (at protein level).

The protein resides in the cell membrane. Its function is as follows. Immunoglobulin-like receptor which plays an inhibitory role in degranulation of mast cells. Negatively regulates IgE-mediated mast cell activation and suppresses the type I immediate hypersensitivity reaction. The sequence is that of Allergin-1 (MILR1) from Homo sapiens (Human).